Here is a 595-residue protein sequence, read N- to C-terminus: Apolipoprotein N-acyltransferase 2 (595 aa).

5 helical membrane passes run 30–50, 63–83, 95–115, 167–187, and 210–230; these read FLAF…FGFF, LFFH…HWII, VVAI…FPIF, AEIT…YTLF, and FITL…FLFK. The CN hydrolase domain maps to 241–555; sequence LNVLIVQPDA…AEALSETIDV (315 aa). Glu293 (proton acceptor) is an active-site residue. Residue Lys372 is part of the active site. Catalysis depends on Cys463, which acts as the Nucleophile. A helical transmembrane segment spans residues 569–589; the sequence is LIPWLMLFLTGIYYLNLLIGI.

This sequence belongs to the CN hydrolase family. Apolipoprotein N-acyltransferase subfamily.

It localises to the cell inner membrane. The enzyme catalyses N-terminal S-1,2-diacyl-sn-glyceryl-L-cysteinyl-[lipoprotein] + a glycerophospholipid = N-acyl-S-1,2-diacyl-sn-glyceryl-L-cysteinyl-[lipoprotein] + a 2-acyl-sn-glycero-3-phospholipid + H(+). It participates in protein modification; lipoprotein biosynthesis (N-acyl transfer). Its function is as follows. Catalyzes the phospholipid dependent N-acylation of the N-terminal cysteine of apolipoprotein, the last step in lipoprotein maturation. The protein is Apolipoprotein N-acyltransferase 2 of Leptospira interrogans serogroup Icterohaemorrhagiae serovar Lai (strain 56601).